The chain runs to 118 residues: Co-chaperonin GroES (118 aa).

Belongs to the GroES chaperonin family. As to quaternary structure, heptamer of 7 subunits arranged in a ring. Interacts with the chaperonin GroEL.

Its subcellular location is the cytoplasm. Functionally, together with the chaperonin GroEL, plays an essential role in assisting protein folding. The GroEL-GroES system forms a nano-cage that allows encapsulation of the non-native substrate proteins and provides a physical environment optimized to promote and accelerate protein folding. GroES binds to the apical surface of the GroEL ring, thereby capping the opening of the GroEL channel. The chain is Co-chaperonin GroES from Helicobacter pylori (strain Shi470).